We begin with the raw amino-acid sequence, 168 residues long: DOMON domain-containing protein CBG21753 (168 aa).

Residues 1-17 form the signal peptide; sequence MIKSMILVALILAFASA. The 119-residue stretch at 25–143 folds into the DOMON domain; the sequence is SGFQSYWRFA…CQKWRWIKSG (119 aa). Residues Asn35 and Asn94 are each glycosylated (N-linked (GlcNAc...) asparagine). Residues 148 to 168 form a disordered region; it reads GQLTRNSKSPKDKKVCPMECN. A compositionally biased stretch (basic and acidic residues) spans 156–168; that stretch reads SPKDKKVCPMECN.

The protein resides in the secreted. The polypeptide is DOMON domain-containing protein CBG21753 (Caenorhabditis briggsae).